Reading from the N-terminus, the 89-residue chain is Small ribosomal subunit protein uS15 (89 aa).

It belongs to the universal ribosomal protein uS15 family. In terms of assembly, part of the 30S ribosomal subunit. Forms a bridge to the 50S subunit in the 70S ribosome, contacting the 23S rRNA.

One of the primary rRNA binding proteins, it binds directly to 16S rRNA where it helps nucleate assembly of the platform of the 30S subunit by binding and bridging several RNA helices of the 16S rRNA. Functionally, forms an intersubunit bridge (bridge B4) with the 23S rRNA of the 50S subunit in the ribosome. This is Small ribosomal subunit protein uS15 from Streptococcus mutans serotype c (strain ATCC 700610 / UA159).